Here is a 137-residue protein sequence, read N- to C-terminus: Venom allergen 4 (137 aa).

The signal sequence occupies residues 1-19 (MKTFVLVSCLLVFTQIIYA).

It belongs to the ant venom allergen 2/4 family. In terms of assembly, monomer. As to expression, expressed by the venom gland.

It is found in the secreted. The polypeptide is Venom allergen 4 (Solenopsis geminata (Tropical fire ant)).